Reading from the N-terminus, the 445-residue chain is Phosphoglucosamine mutase (445 aa).

Ser102 (phosphoserine intermediate) is an active-site residue. Ser102, Asp241, Asp243, and Asp245 together coordinate Mg(2+). Ser102 carries the phosphoserine modification.

It belongs to the phosphohexose mutase family. Requires Mg(2+) as cofactor. Post-translationally, activated by phosphorylation.

It catalyses the reaction alpha-D-glucosamine 1-phosphate = D-glucosamine 6-phosphate. Its function is as follows. Catalyzes the conversion of glucosamine-6-phosphate to glucosamine-1-phosphate. The chain is Phosphoglucosamine mutase from Acinetobacter baumannii (strain ACICU).